The primary structure comprises 298 residues: N-acetylmuramic acid 6-phosphate etherase (298 aa).

Residues 55–218 (AANRYKKGGR…STGVMIRQGK (164 aa)) form the SIS domain. The Proton donor role is filled by Glu83. Glu114 is an active-site residue.

It belongs to the GCKR-like family. MurNAc-6-P etherase subfamily. In terms of assembly, homodimer.

It carries out the reaction N-acetyl-D-muramate 6-phosphate + H2O = N-acetyl-D-glucosamine 6-phosphate + (R)-lactate. It functions in the pathway amino-sugar metabolism; N-acetylmuramate degradation. In terms of biological role, specifically catalyzes the cleavage of the D-lactyl ether substituent of MurNAc 6-phosphate, producing GlcNAc 6-phosphate and D-lactate. This is N-acetylmuramic acid 6-phosphate etherase from Lactobacillus acidophilus (strain ATCC 700396 / NCK56 / N2 / NCFM).